A 180-amino-acid chain; its full sequence is Large ribosomal subunit protein uL5 (180 aa).

Belongs to the universal ribosomal protein uL5 family. In terms of assembly, part of the 50S ribosomal subunit; part of the 5S rRNA/L5/L18/L25 subcomplex. Contacts the 5S rRNA and the P site tRNA. Forms a bridge to the 30S subunit in the 70S ribosome.

In terms of biological role, this is one of the proteins that bind and probably mediate the attachment of the 5S RNA into the large ribosomal subunit, where it forms part of the central protuberance. In the 70S ribosome it contacts protein S13 of the 30S subunit (bridge B1b), connecting the 2 subunits; this bridge is implicated in subunit movement. Contacts the P site tRNA; the 5S rRNA and some of its associated proteins might help stabilize positioning of ribosome-bound tRNAs. In Streptococcus pyogenes serotype M49 (strain NZ131), this protein is Large ribosomal subunit protein uL5.